Reading from the N-terminus, the 433-residue chain is 23S rRNA (uracil(1939)-C(5))-methyltransferase RlmD (433 aa).

A TRAM domain is found at Arg10–Arg68. 4 residues coordinate [4Fe-4S] cluster: Cys81, Cys87, Cys90, and Cys162. S-adenosyl-L-methionine contacts are provided by Gln265, Phe294, Asn299, Glu315, Asn342, and Asp363. The Nucleophile role is filled by Cys389.

It belongs to the class I-like SAM-binding methyltransferase superfamily. RNA M5U methyltransferase family. RlmD subfamily.

It carries out the reaction uridine(1939) in 23S rRNA + S-adenosyl-L-methionine = 5-methyluridine(1939) in 23S rRNA + S-adenosyl-L-homocysteine + H(+). In terms of biological role, catalyzes the formation of 5-methyl-uridine at position 1939 (m5U1939) in 23S rRNA. The sequence is that of 23S rRNA (uracil(1939)-C(5))-methyltransferase RlmD from Shigella sonnei (strain Ss046).